The chain runs to 362 residues: Phospho-2-dehydro-3-deoxyheptonate aldolase (362 aa).

It belongs to the class-I DAHP synthase family.

It catalyses the reaction D-erythrose 4-phosphate + phosphoenolpyruvate + H2O = 7-phospho-2-dehydro-3-deoxy-D-arabino-heptonate + phosphate. It participates in metabolic intermediate biosynthesis; chorismate biosynthesis; chorismate from D-erythrose 4-phosphate and phosphoenolpyruvate: step 1/7. Stereospecific condensation of phosphoenolpyruvate (PEP) and D-erythrose-4-phosphate (E4P) giving rise to 3-deoxy-D-arabino-heptulosonate-7-phosphate (DAHP). In Haemophilus influenzae (strain ATCC 51907 / DSM 11121 / KW20 / Rd), this protein is Phospho-2-dehydro-3-deoxyheptonate aldolase (aroG).